Here is a 476-residue protein sequence, read N- to C-terminus: Replication factor C large subunit (476 aa).

An ATP-binding site is contributed by 43–50 (GKPGIGKT). The tract at residues 435 to 476 (LEALRMQEPPVPETPPAAEEQPLEEPQEEKKLAPKQATLDFF) is disordered.

It belongs to the activator 1 small subunits family. RfcL subfamily. In terms of assembly, heteromultimer composed of small subunits (RfcS) and large subunits (RfcL).

Its function is as follows. Part of the RFC clamp loader complex which loads the PCNA sliding clamp onto DNA. The protein is Replication factor C large subunit of Methanocorpusculum labreanum (strain ATCC 43576 / DSM 4855 / Z).